The sequence spans 197 residues: Segregation and condensation protein B (197 aa).

This sequence belongs to the ScpB family. Homodimer. Homodimerization may be required to stabilize the binding of ScpA to the Smc head domains. Component of a cohesin-like complex composed of ScpA, ScpB and the Smc homodimer, in which ScpA and ScpB bind to the head domain of Smc. The presence of the three proteins is required for the association of the complex with DNA.

The protein resides in the cytoplasm. In terms of biological role, participates in chromosomal partition during cell division. May act via the formation of a condensin-like complex containing Smc and ScpA that pull DNA away from mid-cell into both cell halves. This is Segregation and condensation protein B from Halalkalibacterium halodurans (strain ATCC BAA-125 / DSM 18197 / FERM 7344 / JCM 9153 / C-125) (Bacillus halodurans).